The sequence spans 225 residues: uncharacterized protein (225 aa).

The helical transmembrane segment at 12–32 threads the bilayer; that stretch reads AGFMMIFVFVIASFLLVLLFF.

The protein localises to the cell membrane. This is an uncharacterized protein from Bacillus subtilis (strain 168).